Reading from the N-terminus, the 321-residue chain is Phosphate metabolism protein 8 (321 aa).

It belongs to the SSM1 family.

Functionally, may be involved in phosphate metabolism. This is Phosphate metabolism protein 8 (PHM8) from Saccharomyces cerevisiae (strain ATCC 204508 / S288c) (Baker's yeast).